The following is a 411-amino-acid chain: Bifunctional protein GlmU (411 aa).

Positions 1-204 (MDAIILCAGK…NGKLHGVELK (204 aa)) are pyrophosphorylase. Residues 6-9 (LCAG), Gln74, and Gly79 contribute to the UTP site. Residues Thr80, Gly130, Asn142, and Asn158 each contribute to the N-acetyl-alpha-D-glucosamine 1-phosphate site. A linker region spans residues 205–224 (GYWNDIGHPWDVLSANNHFL). Positions 225-411 (NKIISKVSGK…DELVITKKRN (187 aa)) are N-acetyltransferase. His308 functions as the Proton acceptor in the catalytic mechanism. Residues Ala384 and Lys401 each coordinate acetyl-CoA.

This sequence in the N-terminal section; belongs to the N-acetylglucosamine-1-phosphate uridyltransferase family. It in the C-terminal section; belongs to the transferase hexapeptide repeat family.

The enzyme catalyses N-acetyl-alpha-D-glucosamine 1-phosphate + UTP + H(+) = UDP-N-acetyl-alpha-D-glucosamine + diphosphate. It carries out the reaction alpha-D-glucosamine 1-phosphate + acetyl-CoA = N-acetyl-alpha-D-glucosamine 1-phosphate + CoA + H(+). Its pathway is nucleotide-sugar biosynthesis; UDP-N-acetyl-alpha-D-glucosamine biosynthesis; N-acetyl-alpha-D-glucosamine 1-phosphate from alpha-D-glucosamine 6-phosphate (route II): step 2/2. It functions in the pathway nucleotide-sugar biosynthesis; UDP-N-acetyl-alpha-D-glucosamine biosynthesis; UDP-N-acetyl-alpha-D-glucosamine from N-acetyl-alpha-D-glucosamine 1-phosphate: step 1/1. Its function is as follows. Catalyzes the last two sequential reactions in the de novo biosynthetic pathway for UDP-N-acetyl-glucosamine (UDP-GlcNAc). Responsible for the acetylation of GlcN-1-P to GlcNAc-1-P, and for the uridyl transfer from UTP to GlcNAc-1-P, to produce UDP-GlcNAc and pyrophosphate. The protein is Bifunctional protein GlmU of Methanococcus maripaludis (strain DSM 14266 / JCM 13030 / NBRC 101832 / S2 / LL).